The chain runs to 574 residues: Putative ABC transporter ATP-binding protein VV2_1533 (574 aa).

ABC transporter domains are found at residues 3–244 and 299–533; these read IEFS…GIRE and LDVR…ANLT. Residues 37–44 and 332–339 contribute to the ATP site; these read GPSGSGKS and GKNGSGKS.

This sequence belongs to the ABC transporter superfamily.

The protein localises to the cell inner membrane. In terms of biological role, probably part of an ABC transporter complex. Responsible for energy coupling to the transport system. The sequence is that of Putative ABC transporter ATP-binding protein VV2_1533 from Vibrio vulnificus (strain CMCP6).